Consider the following 603-residue polypeptide: MAVQDRSVLVLYGSETGNAQDMAEELGRICQRLHFKSRVEELDVVDLNALLQPKFVIFVISTTGQGDMPHNSLLFWKRLLRKKLPPGCLASVNYTTFGLGDSTYLKFNWAARKLNRRLDQLGAATFIDPYEADEQFPDGLDGSFVRWTGRLYNHFLEHHPAPSGLEPIPDDVILPPKWSLETTIQNSTETNGHVPPSLENIPSSTLLPIPDGWTATLVGNGRLTPEKHWQDVRLISFDVPRRDGVKLACVPGDCLTIYPKNFPQDVQRLITLMEWEDIADKPLDLSQCESLPTNLFTDSKSTLRELLLNNIDFTAIPRRSFLKNMSYFSTNPDHKERLLEFTMAEYLDEYFDYATRSRRSILEVLEEFSSVKLPAERLFDIFPLIRGRDFSIANGGVHQSHPTDENKTRIELLVALVKYRTVLRKPREGLCSRYLDNIPMNSTLTVTRKPVLSPIHGAQNAQRPLVAIATGTGLAPIRALLHERLTQPSPGPMYLFFGNRNREADYFFQQEFDALVTEGQLNVFLAFSRDQRNKIYVQDRLLEEAKRIEEVIFDNGIFCVCGGSTKMADAAKKAVFEPFSEDVKDVEERKKMLASLTWWQEIW.

In terms of domain architecture, Flavodoxin-like spans 8 to 152 (VLVLYGSETG…SFVRWTGRLY (145 aa)). Residues 14–19 (SETGNA), 61–64 (STTG), 99–108 (LGDSTYLKFN), and E134 contribute to the FMN site. Residues 210–457 (PDGWTATLVG…RKPVLSPIHG (248 aa)) enclose the FAD-binding FR-type domain. Residues R358, 388–391 (RDFS), and 429–432 (GLCS) each bind FAD. NADP(+) contacts are provided by residues T472, 528 to 529 (SR), and 534 to 538 (KIYVQ). Residue W603 participates in FAD binding.

The protein belongs to the NADPH-dependent diflavin oxidoreductase NDOR1 family. This sequence in the N-terminal section; belongs to the flavodoxin family. It in the C-terminal section; belongs to the flavoprotein pyridine nucleotide cytochrome reductase family. In terms of assembly, interacts with DRE2; as part of the cytosolic iron-sulfur (Fe-S) protein assembly (CIA) machinery. Requires FAD as cofactor. It depends on FMN as a cofactor.

It localises to the cytoplasm. The protein resides in the mitochondrion. It catalyses the reaction 2 oxidized [2Fe-2S]-[protein] + NADPH = 2 reduced [2Fe-2S]-[protein] + NADP(+) + H(+). Functionally, NADPH-dependent reductase which is a central component of the cytosolic iron-sulfur (Fe-S) protein assembly (CIA) machinery. Transfers electrons from NADPH via its FAD and FMN prosthetic groups to the [2Fe-2S] cluster of DRE2, another key component of the CIA machinery. In turn, this reduced cluster provides electrons for assembly of cytosolic iron-sulfur cluster proteins. Positively controls H(2)O(2)-induced cell death. This Gibberella zeae (strain ATCC MYA-4620 / CBS 123657 / FGSC 9075 / NRRL 31084 / PH-1) (Wheat head blight fungus) protein is NADPH-dependent diflavin oxidoreductase 1.